Consider the following 400-residue polypeptide: MTQRLFTSESVTEGHPDKICDAISDSILDAMLAVDPDSHVAVETVVTTGQVHVVGEVRCRGYVEIPSLVRQTLRNIGFLSSDMGFDGATCGVSVSIGEQSLEIGAGVDTALEARDGAEVEDDDRAGAGDQGLMFGYATNETPEYMPLPIALAHRLARRLTAVRKDDIVPHLRPDGKTQVTLAYNDDNNPIRIDTIVISTQHDPGVSRQWLEEQLRTNVITPVIKDAGVENLVDDELTVLINPSGSFVVGGPMGDAGLTGRKIIVDTYGGMARHGGGAFSGKDPSKVDRSAAYAMRWVAKNIVAAGLADRCEVQVAYAIGRANPVGLYVETFGTEKEPISAIQEAVQKVFDLRPAAIIRELDLKRPIYAQTAAYGHFGRTDLDLPWERLDRVDDLKAAISR.

H15 contributes to the ATP binding site. Residue D17 participates in Mg(2+) binding. E43 provides a ligand contact to K(+). L-methionine contacts are provided by E56 and Q99. The tract at residues 99-109 is flexible loop; sequence QSLEIGAGVDT. ATP contacts are provided by residues 174-176, D254, 260-261, A277, and K281; these read DGK and RK. D254 is a binding site for L-methionine. L-methionine is bound at residue K285.

It belongs to the AdoMet synthase family. Homotetramer; dimer of dimers. Mg(2+) is required as a cofactor. It depends on K(+) as a cofactor.

The protein resides in the cytoplasm. It carries out the reaction L-methionine + ATP + H2O = S-adenosyl-L-methionine + phosphate + diphosphate. It functions in the pathway amino-acid biosynthesis; S-adenosyl-L-methionine biosynthesis; S-adenosyl-L-methionine from L-methionine: step 1/1. Functionally, catalyzes the formation of S-adenosylmethionine (AdoMet) from methionine and ATP. The overall synthetic reaction is composed of two sequential steps, AdoMet formation and the subsequent tripolyphosphate hydrolysis which occurs prior to release of AdoMet from the enzyme. This is S-adenosylmethionine synthase from Corynebacterium kroppenstedtii (strain DSM 44385 / JCM 11950 / CIP 105744 / CCUG 35717).